The following is a 420-amino-acid chain: MSKGKVCLAYSGGLDTSVILAWLLDQGYEVVAFMANVGQEEDFDAAKEKALKIGACKFVCVDCREDFVKDILFPAVQVNAVYEDVYLLGTSLARPVIAKAQIDVAKQEGCFAVSHGCTGKGNDQIRFELSFYALKPDVKCITPWRMPEFFERFAGRKDLLDYAAQKGIPVAQTKAKPWSTDENQAHISYEAGILEDPDTTPPKDMWKLIVDPMDAPDQPQDLTIDFERGLPVKLTYTDNKTSKEVSVTKPLDVFLAASNLARANGVGRIDIVEDRYINLKSRGCYEQAPLTVLRKAHVDLEGLTLDKEVRQLRDSFVTPNYSRLIYNGSYFTPECEYIRSMIQPSQNSVNGTVRVRLYKGNVIILGRSTKTEKLYDPTESSMDELTGFLPTDTTGFIAIQAIRIKKYGESKKTKGEELTL.

Residues 9 to 17 (AYSGGLDTS) and Ala35 each bind ATP. L-citrulline-binding residues include Tyr86 and Ser91. 114-122 (SHGCTGKGN) provides a ligand contact to ATP. Residues Thr118, Asn122, and Asp123 each coordinate L-aspartate. An L-citrulline-binding site is contributed by Asn122. Arg126, Ser179, Ser188, Glu273, and Tyr285 together coordinate L-citrulline.

This sequence belongs to the argininosuccinate synthase family. Type 1 subfamily. As to quaternary structure, homotetramer.

It localises to the cytoplasm. The enzyme catalyses L-citrulline + L-aspartate + ATP = 2-(N(omega)-L-arginino)succinate + AMP + diphosphate + H(+). It functions in the pathway amino-acid biosynthesis; L-arginine biosynthesis; L-arginine from L-ornithine and carbamoyl phosphate: step 2/3. In terms of biological role, catalyzes the eighth step in arginine biosynthesis. Also has a catabolic function as the first enzyme of citrulline utilization as nitrogen source via arginine and the reactions involved in the arginase pathway. The protein is Argininosuccinate synthase (ARG1) of Saccharomyces cerevisiae (strain ATCC 204508 / S288c) (Baker's yeast).